The following is a 154-amino-acid chain: Ribonuclease P protein component (154 aa).

The protein belongs to the RnpA family. Consists of a catalytic RNA component (M1 or rnpB) and a protein subunit.

The catalysed reaction is Endonucleolytic cleavage of RNA, removing 5'-extranucleotides from tRNA precursor.. RNaseP catalyzes the removal of the 5'-leader sequence from pre-tRNA to produce the mature 5'-terminus. It can also cleave other RNA substrates such as 4.5S RNA. The protein component plays an auxiliary but essential role in vivo by binding to the 5'-leader sequence and broadening the substrate specificity of the ribozyme. The polypeptide is Ribonuclease P protein component (Chlorobaculum tepidum (strain ATCC 49652 / DSM 12025 / NBRC 103806 / TLS) (Chlorobium tepidum)).